A 342-amino-acid polypeptide reads, in one-letter code: Phosphate acyltransferase (342 aa).

This sequence belongs to the PlsX family. In terms of assembly, homodimer. Probably interacts with PlsY.

It localises to the cytoplasm. The enzyme catalyses a fatty acyl-[ACP] + phosphate = an acyl phosphate + holo-[ACP]. The protein operates within lipid metabolism; phospholipid metabolism. Functionally, catalyzes the reversible formation of acyl-phosphate (acyl-PO(4)) from acyl-[acyl-carrier-protein] (acyl-ACP). This enzyme utilizes acyl-ACP as fatty acyl donor, but not acyl-CoA. In Shewanella pealeana (strain ATCC 700345 / ANG-SQ1), this protein is Phosphate acyltransferase.